The sequence spans 764 residues: Ergosteryl-beta-glucosidase (764 aa).

Glutamate 515 serves as the catalytic Nucleophile. The interval 588–629 (HDTRAKTPTPEPSPASTVASVSTSTSKSGSSQPPSFIKPDNH) is disordered. Residue threonine 594 is modified to Phosphothreonine. The span at 601 to 622 (PASTVASVSTSTSKSGSSQPPS) shows a compositional bias: low complexity.

This sequence belongs to the glycosyl hydrolase 5 (cellulase A) family.

It localises to the cytoplasm. The protein resides in the cytosol. Its subcellular location is the vacuole membrane. The enzyme catalyses ergosteryl 3-beta-D-glucoside + H2O = ergosterol + D-glucose. Its function is as follows. Ergosteryl beta-glucosidase involved in the ergosteryl beta-glucoside (EG) catabolic pathway and vacuole formation via hydrolysis of EG to generate glucose. Is also able to hydrolyze cholesteryl beta-glucoside and sitosteryl beta-glucoside to generate glucose; and C6-7-nitro-2,1,3-benzoxadiazole (NBD)-GlcCer to generate C6-NBD-ceramide (Cer). The sequence is that of Ergosteryl-beta-glucosidase from Saccharomyces cerevisiae (strain ATCC 204508 / S288c) (Baker's yeast).